A 1023-amino-acid chain; its full sequence is Peroxisome proliferator-activated receptor gamma coactivator 1-beta (1023 aa).

Positions 1–91 (MAGNDCGALL…LFQIDSENEA (91 aa)) are abolishes DNA transcriptional activity when missing. A disordered region spans residues 122-148 (LSCTSASPAPSSAPPSPAPEKPSAPAP). Positions 132 to 146 (SSAPPSPAPEKPSAP) are enriched in pro residues. Positions 156–160 (LQKLL) match the LXXLL motif 1 motif. 3 disordered regions span residues 165-210 (YPTS…QSQS), 237-278 (LQSP…PGAP), and 302-331 (RKLP…WSRH). The short motif at 343–347 (LRELL) is the LXXLL motif 2 element. Disordered stretches follow at residues 369–463 (LTPR…LPWT), 520–567 (RELG…QLPP), 601–623 (TAGL…FKPD), and 636–683 (LPSP…GQKR). Phosphoserine is present on serine 384. The span at 412-422 (LRLEVKREVRR) shows a compositional bias: basic and acidic residues. Positions 429-450 (QEEEDEEEEEEEEEEEKEEEEE) are enriched in acidic residues. At serine 524 the chain carries Phosphoserine. Residues 614 to 623 (PTEEDPFKPD) are compositionally biased toward basic and acidic residues. Serine 638 carries the phosphoserine modification. The short motif at 691–694 (DHDY) is the HCFC1-binding-motif (HBM) element. Disordered stretches follow at residues 717 to 758 (VHLE…LRDH) and 779 to 867 (DLAS…WSPA). Low complexity predominate over residues 793-805 (EDSSSSSGESSFL). The segment covering 806–825 (PEEEEEEGEEEEEDDEEEDS) has biased composition (acidic residues). The segment covering 849–866 (CSRSRSSSGSSPCHSWSP) has biased composition (low complexity). An RRM domain is found at 902 to 976 (RVVYIQNLSS…RNEPSFQLSY (75 aa)).

Interacts with hepatocyte nuclear factor 4-alpha/HNF4A, Sterol regulatory binding transcription factor 1/SREBF1, PPAR-alpha/PPARA, thyroid hormone receptor beta/THRB and host cell factor/HCFC1. Interacts with estrogen-related receptor gamma/ESRRG and alpha/ESRRA. Interacts with PRDM16. Interacts with estrogen receptor alpha/ESR1. As to expression, ubiquitous with higher expression in heart, brain and skeletal muscle.

It is found in the nucleus. Its function is as follows. Plays a role of stimulator of transcription factors and nuclear receptors activities. Activates transcriptional activity of estrogen receptor alpha, nuclear respiratory factor 1 (NRF1) and glucocorticoid receptor in the presence of glucocorticoids. May play a role in constitutive non-adrenergic-mediated mitochondrial biogenesis as suggested by increased basal oxygen consumption and mitochondrial number when overexpressed. May be involved in fat oxidation and non-oxidative glucose metabolism and in the regulation of energy expenditure. Induces the expression of PERM1 in the skeletal muscle in an ESRRA-dependent manner. This chain is Peroxisome proliferator-activated receptor gamma coactivator 1-beta (PPARGC1B), found in Homo sapiens (Human).